The primary structure comprises 138 residues: Large ribosomal subunit protein uL16 (138 aa).

Positions 1–15 (MLSPRKVKYRKKQRG) are enriched in basic residues. A disordered region spans residues 1-21 (MLSPRKVKYRKKQRGRLSGEA).

It belongs to the universal ribosomal protein uL16 family. As to quaternary structure, part of the 50S ribosomal subunit.

Its function is as follows. Binds 23S rRNA and is also seen to make contacts with the A and possibly P site tRNAs. The sequence is that of Large ribosomal subunit protein uL16 from Borrelia recurrentis (strain A1).